Consider the following 1806-residue polypeptide: Atrochrysone carboxylic acid synthase (1806 aa).

Positions Asp-30 to His-283 are N-terminal acylcarrier protein transacylase domain (SAT). In terms of domain architecture, Ketosynthase family 3 (KS3) spans Gln-416–Glu-850. Catalysis depends on for beta-ketoacyl synthase activity residues Cys-589, His-725, and His-768. Residues Phe-951–Val-1270 form a malonyl-CoA:ACP transacylase (MAT) domain region. A product template (PT) domain region spans residues Thr-1340–Ala-1659. The segment at Gln-1344–Leu-1479 is N-terminal hotdog fold. Residues Gln-1344 to Asn-1654 form the PKS/mFAS DH domain. Catalysis depends on His-1376, which acts as the Proton acceptor; for dehydratase activity. The tract at residues Ile-1506–Asn-1654 is C-terminal hotdog fold. The active-site Proton donor; for dehydratase activity is Asp-1565. Residues His-1668 to Ala-1726 are disordered. Residues Pro-1685–Pro-1708 show a composition bias toward low complexity. Positions Ala-1709–Ala-1721 are enriched in pro residues. The Carrier domain occupies Gly-1728–Tyr-1805. Ser-1765 bears the O-(pantetheine 4'-phosphoryl)serine mark.

It catalyses the reaction holo-[ACP] + 8 malonyl-CoA + 8 H(+) = atrochrysone carboxyl-[ACP] + 8 CO2 + 8 CoA + 2 H2O. The protein operates within secondary metabolite biosynthesis. Its function is as follows. Atrochrysone carboxylic acid synthase; part of the gene cluster that mediates the biosynthesis of monodictyphenone, a prenyl xanthone derivative. The pathway begins with the synthesis of atrochrysone thioester by the polyketide synthase (PKS) mdpG. The atrochrysone carboxyl ACP thioesterase mdpF then breaks the thioester bond and releases the atrochrysone carboxylic acid from mdpG. The atrochrysone carboxylic acid is then converted to atrochrysone which is further transformed into emodin anthrone. The next step is performed by the anthrone oxygenase mdpH that catalyzes the oxidation of emodinanthrone to emodin. Emodin is further modified to yield monodictyphenone via several steps involving mdpB, mdpC mdpJ, mdpK and mdpL. The short chain dehydrogenase mdpC converts the tautomers of emodin hydroquinone into the 3-hydroxy-3,4-dihydroan-thracen-1(2H)-one derivative. These enzymes with xptA, xptB and xptC are also proposed to be involved in the synthesis of shamixanthone from emodin. Especially, direct reduction of emodin by the short chain dehydrogenase mdpC followed by dehydration catalyzed by the scytalone dehydratase-like protein mdpB gives loss of oxygen and formation of chrysophanol intermediate in two simple steps. The protein is Atrochrysone carboxylic acid synthase of Emericella nidulans (strain FGSC A4 / ATCC 38163 / CBS 112.46 / NRRL 194 / M139) (Aspergillus nidulans).